A 231-amino-acid chain; its full sequence is RNA pyrophosphohydrolase (231 aa).

The Nudix hydrolase domain maps to 6 to 149; sequence GFRPNVGIIL…KRDVYQLALT (144 aa). Positions 38–59 match the Nudix box motif; it reads GGIKYGETPEQAMYRELHEEIG. The disordered stretch occupies residues 168–200; sequence VHHGRHGSGQRYAQQPGQPPTLAQRRPLQPVTQ.

This sequence belongs to the Nudix hydrolase family. RppH subfamily. A divalent metal cation serves as cofactor.

Functionally, accelerates the degradation of transcripts by removing pyrophosphate from the 5'-end of triphosphorylated RNA, leading to a more labile monophosphorylated state that can stimulate subsequent ribonuclease cleavage. This Cupriavidus pinatubonensis (strain JMP 134 / LMG 1197) (Cupriavidus necator (strain JMP 134)) protein is RNA pyrophosphohydrolase.